The following is a 263-amino-acid chain: Putative protein JayE (263 aa).

It belongs to the Mu gp47/PBSX XkdT family.

This is Putative protein JayE (jayE) from Escherichia coli (strain K12).